A 290-amino-acid chain; its full sequence is Triplex capsid protein 1 (290 aa).

The protein belongs to the herpesviridae TRX1 protein family. Interacts with TRX2, MCP and capsid vertex component 2/CVC2.

The protein resides in the virion. The protein localises to the host nucleus. Structural component of the T=16 icosahedral capsid. The capsid is composed of pentamers and hexamers of major capsid protein/MCP, which are linked together by heterotrimers called triplexes. These triplexes are formed by a single molecule of triplex protein 1/TRX1 and two copies of triplex protein 2/TRX2. Additionally, TRX1 is required for efficient transport of TRX2 to the nucleus, which is the site of capsid assembly. This chain is Triplex capsid protein 1, found in Human cytomegalovirus (strain AD169) (HHV-5).